A 685-amino-acid chain; its full sequence is Serine/threonine-protein kinase PLK2 (685 aa).

The tract at residues 24–71 is disordered; the sequence is KGCGADSKKKRPPQPPEESQPPQSQAQVPPAAAHHHHHHSHSGPEISR. The span at 43–55 shows a compositional bias: low complexity; the sequence is QPPQSQAQVPPAA. The region spanning 82–334 is the Protein kinase domain; sequence YCRGKVLGKG…LDDIIRHDFF (253 aa). Residues 88–96 and K111 contribute to the ATP site; that span reads LGKGGFAKC. Catalysis depends on D205, which acts as the Proton acceptor. A Phosphothreonine modification is found at T239. The interval 406–433 is disordered; sequence SITQQPSKHRTDEELQPPTTTVARSGTP. POLO box domains are found at residues 503-581 and 601-685; these read WVTK…YMEE and YLLQ…QRCN.

It belongs to the protein kinase superfamily. Ser/Thr protein kinase family. CDC5/Polo subfamily. In terms of assembly, interacts with NSF; causing NSF dissociation from GRIA2. Interacts with CIB1. Post-translationally, catalytic activity is enhanced by phosphorylation of Thr-239.

It is found in the cytoplasm. Its subcellular location is the cytoskeleton. The protein resides in the microtubule organizing center. The protein localises to the centrosome. It localises to the centriole. It is found in the cell projection. Its subcellular location is the dendrite. The enzyme catalyses L-seryl-[protein] + ATP = O-phospho-L-seryl-[protein] + ADP + H(+). It carries out the reaction L-threonyl-[protein] + ATP = O-phospho-L-threonyl-[protein] + ADP + H(+). Its activity is regulated as follows. Activated by phosphorylation of Thr-239. Once activated, activity is stimulated by binding target proteins. Tumor suppressor serine/threonine-protein kinase involved in synaptic plasticity, centriole duplication and G1/S phase transition. Polo-like kinases act by binding and phosphorylating proteins that are already phosphorylated on a specific motif recognized by the POLO box domains. Phosphorylates CPAP, NPM1, RAPGEF2, RASGRF1, SNCA, SIPA1L1 and SYNGAP1. Plays a key role in synaptic plasticity and memory by regulating the Ras and Rap protein signaling: required for overactivity-dependent spine remodeling by phosphorylating the Ras activator RASGRF1 and the Rap inhibitor SIPA1L1 leading to their degradation by the proteasome. Conversely, phosphorylates the Rap activator RAPGEF2 and the Ras inhibitor SYNGAP1, promoting their activity. Also regulates synaptic plasticity independently of kinase activity, via its interaction with NSF that disrupts the interaction between NSF and the GRIA2 subunit of AMPARs, leading to a rapid rundown of AMPAR-mediated current that occludes long term depression. Required for procentriole formation and centriole duplication by phosphorylating CPAP and NPM1, respectively. Its induction by p53/TP53 suggests that it may participate in the mitotic checkpoint following stress. This chain is Serine/threonine-protein kinase PLK2 (PLK2), found in Pongo abelii (Sumatran orangutan).